A 465-amino-acid chain; its full sequence is Interferon-inducible GTPase 5 (465 aa).

One can recognise an IRG-type G domain in the interval Thr53–Asp235. GTP-binding positions include Glu62–Ser69, Thr87–Glu91, Lys169–Asp171, and Ser216–Leu218. 2 positions are modified to phosphoserine: Ser247 and Ser304. The disordered stretch occupies residues Glu405–Pro438.

It belongs to the TRAFAC class dynamin-like GTPase superfamily. IRG family.

Its subcellular location is the cell projection. The protein localises to the cilium. The protein resides in the flagellum. It localises to the lipid droplet. The enzyme catalyses GTP + H2O = GDP + phosphate + H(+). Required for sperm motility and therefore male fertility, via positive regulation of spermatozoa fibrous sheath formation. The sequence is that of Interferon-inducible GTPase 5 (IRGC) from Bos taurus (Bovine).